We begin with the raw amino-acid sequence, 112 residues long: MKGTLLLLALLMIGELGFHTTEACVPFFAGYAGVISGSRLWLYHELSAFNGTPKETVAYEKIQDCYKEQGVKSQTLEPQILASILVTPECLQYYSEETFTKIKDALKKISQH.

A signal peptide spans 1 to 23 (MKGTLLLLALLMIGELGFHTTEA).

It belongs to the secretoglobin family. As to expression, expressed in lacrimal gland, at higher level in males than females.

The protein resides in the secreted. The chain is Secretoglobin family 2B member 24 (Scgb2b24) from Mus musculus (Mouse).